Reading from the N-terminus, the 248-residue chain is 2,3-bisphosphoglycerate-dependent phosphoglycerate mutase (248 aa).

Substrate contacts are provided by residues 9 to 16, 22 to 23, arginine 61, 88 to 91, lysine 99, 115 to 116, and 183 to 184; these read RHGHSEWN, TG, ERHY, RR, and GN. Histidine 10 acts as the Tele-phosphohistidine intermediate in catalysis. Glutamate 88 acts as the Proton donor/acceptor in catalysis.

Belongs to the phosphoglycerate mutase family. BPG-dependent PGAM subfamily.

It catalyses the reaction (2R)-2-phosphoglycerate = (2R)-3-phosphoglycerate. It participates in carbohydrate degradation; glycolysis; pyruvate from D-glyceraldehyde 3-phosphate: step 3/5. Its function is as follows. Catalyzes the interconversion of 2-phosphoglycerate and 3-phosphoglycerate. This is 2,3-bisphosphoglycerate-dependent phosphoglycerate mutase from Arthrobacter sp. (strain FB24).